Here is a 158-residue protein sequence, read N- to C-terminus: SsrA-binding protein (158 aa).

The interval 135-158 is disordered; that stretch reads DKRKTLKDRDWERDKQRGFKKDLD. Basic and acidic residues predominate over residues 141–158; the sequence is KDRDWERDKQRGFKKDLD.

The protein belongs to the SmpB family.

It localises to the cytoplasm. Required for rescue of stalled ribosomes mediated by trans-translation. Binds to transfer-messenger RNA (tmRNA), required for stable association of tmRNA with ribosomes. tmRNA and SmpB together mimic tRNA shape, replacing the anticodon stem-loop with SmpB. tmRNA is encoded by the ssrA gene; the 2 termini fold to resemble tRNA(Ala) and it encodes a 'tag peptide', a short internal open reading frame. During trans-translation Ala-aminoacylated tmRNA acts like a tRNA, entering the A-site of stalled ribosomes, displacing the stalled mRNA. The ribosome then switches to translate the ORF on the tmRNA; the nascent peptide is terminated with the 'tag peptide' encoded by the tmRNA and targeted for degradation. The ribosome is freed to recommence translation, which seems to be the essential function of trans-translation. The chain is SsrA-binding protein from Psychrobacter arcticus (strain DSM 17307 / VKM B-2377 / 273-4).